The sequence spans 229 residues: Ribonuclease 3 (229 aa).

Residues tryptophan 4–glycine 133 form the RNase III domain. Residue glutamate 46 participates in Mg(2+) binding. The active site involves aspartate 50. Residues aspartate 119 and glutamate 122 each contribute to the Mg(2+) site. Residue glutamate 122 is part of the active site. The DRBM domain occupies aspartate 159–histidine 228.

It belongs to the ribonuclease III family. As to quaternary structure, homodimer. It depends on Mg(2+) as a cofactor.

It is found in the cytoplasm. It carries out the reaction Endonucleolytic cleavage to 5'-phosphomonoester.. Digests double-stranded RNA. Involved in the processing of primary rRNA transcript to yield the immediate precursors to the large and small rRNAs (23S and 16S). Processes some mRNAs, and tRNAs when they are encoded in the rRNA operon. Processes pre-crRNA and tracrRNA of type II CRISPR loci if present in the organism. The sequence is that of Ribonuclease 3 from Listeria monocytogenes serotype 4a (strain HCC23).